Reading from the N-terminus, the 417-residue chain is Serine hydroxymethyltransferase (417 aa).

Residues Leu-121 and 125–127 (GHL) each bind (6S)-5,6,7,8-tetrahydrofolate. Position 229 is an N6-(pyridoxal phosphate)lysine (Lys-229). (6S)-5,6,7,8-tetrahydrofolate is bound at residue 355 to 357 (SPF).

The protein belongs to the SHMT family. As to quaternary structure, homodimer. Pyridoxal 5'-phosphate is required as a cofactor.

It localises to the cytoplasm. The catalysed reaction is (6R)-5,10-methylene-5,6,7,8-tetrahydrofolate + glycine + H2O = (6S)-5,6,7,8-tetrahydrofolate + L-serine. Its pathway is one-carbon metabolism; tetrahydrofolate interconversion. The protein operates within amino-acid biosynthesis; glycine biosynthesis; glycine from L-serine: step 1/1. Functionally, catalyzes the reversible interconversion of serine and glycine with tetrahydrofolate (THF) serving as the one-carbon carrier. This reaction serves as the major source of one-carbon groups required for the biosynthesis of purines, thymidylate, methionine, and other important biomolecules. Also exhibits THF-independent aldolase activity toward beta-hydroxyamino acids, producing glycine and aldehydes, via a retro-aldol mechanism. The protein is Serine hydroxymethyltransferase of Aeromonas hydrophila subsp. hydrophila (strain ATCC 7966 / DSM 30187 / BCRC 13018 / CCUG 14551 / JCM 1027 / KCTC 2358 / NCIMB 9240 / NCTC 8049).